The chain runs to 442 residues: Capsid vertex component 1 (442 aa).

This sequence belongs to the herpesviridae CVC1 protein family. Interacts (via C-terminus) with capsid vertex component 2/CVC2.

The protein resides in the virion. Its subcellular location is the host nucleus. Its function is as follows. Capsid vertex-specific component that plays a role during viral DNA encapsidation, assuring correct genome cleavage and presumably stabilizing capsids that contain full-length viral genomes. This chain is Capsid vertex component 1, found in Homo sapiens (Human).